Consider the following 627-residue polypeptide: DNA topoisomerase 4 subunit B (627 aa).

ATP is bound by residues Tyr4, Asn41, Asp68, 109 to 115 (GLHGVGV), and Lys333. Residues 412–525 (TELFIVEGDS…NGHIYIAQPP (114 aa)) form the Toprim domain. Positions 418, 490, and 492 each coordinate Mg(2+).

It belongs to the type II topoisomerase family. ParE type 1 subfamily. Heterotetramer composed of ParC and ParE. The cofactor is Mg(2+). Mn(2+) is required as a cofactor. Ca(2+) serves as cofactor.

The enzyme catalyses ATP-dependent breakage, passage and rejoining of double-stranded DNA.. Its activity is regulated as follows. Pyrrolopyrimidines inhibit both GyrB and its paralog in topoisomerase IV (parE). In terms of biological role, topoisomerase IV is essential for chromosome segregation. It relaxes supercoiled DNA. Performs the decatenation events required during the replication of a circular DNA molecule. This Francisella tularensis subsp. holarctica (strain LVS) protein is DNA topoisomerase 4 subunit B.